The sequence spans 353 residues: Glycerol-3-phosphate dehydrogenase [NAD(P)+] (353 aa).

3 residues coordinate NADPH: W11, R40, and K115. K115, G156, and S158 together coordinate sn-glycerol 3-phosphate. An NADPH-binding site is contributed by A160. K211, D264, S274, R275, and N276 together coordinate sn-glycerol 3-phosphate. The active-site Proton acceptor is the K211. R275 is an NADPH binding site. Residues V299 and E301 each coordinate NADPH.

Belongs to the NAD-dependent glycerol-3-phosphate dehydrogenase family.

The protein localises to the cytoplasm. The enzyme catalyses sn-glycerol 3-phosphate + NAD(+) = dihydroxyacetone phosphate + NADH + H(+). The catalysed reaction is sn-glycerol 3-phosphate + NADP(+) = dihydroxyacetone phosphate + NADPH + H(+). Its pathway is membrane lipid metabolism; glycerophospholipid metabolism. Catalyzes the reduction of the glycolytic intermediate dihydroxyacetone phosphate (DHAP) to sn-glycerol 3-phosphate (G3P), the key precursor for phospholipid synthesis. The chain is Glycerol-3-phosphate dehydrogenase [NAD(P)+] from Polaromonas sp. (strain JS666 / ATCC BAA-500).